A 325-amino-acid chain; its full sequence is MSDTASWQPSASIANLLKRAAIMAEIRRFFADRGVLEVETPAMSQATVTDVHLFPFQTRFVGPGAAAGIDLYLMTSPEYHMKRLLAAGSGPIYQLCRSFRNEEMGRHHNPEFTMLEWYRPHYDMYRLINEVDDLLQQVLECAPAETLSYQQAFQRHLEIDPLSADKAQLREVAQKLGAGDLANREEDRDTLLQLLFVLGVEPEIGKEKPAFVYHFPATQAALAEISPEDHRVAERFEVYFKGIELANGFRELTDSREQRQRFEQDNRKRAAAGLPQQPIDTYLLDALSAGMPESSGVALGVDRLVMLALKAEQLSDVIAFTVDRC.

Residue 76-78 (SPE) participates in substrate binding. ATP contacts are provided by residues 100-102 (RNE) and asparagine 109. Substrate is bound at residue tyrosine 118. 244-245 (EL) contacts ATP. Glutamate 251 is a substrate binding site. Residue glycine 300 coordinates ATP.

Belongs to the class-II aminoacyl-tRNA synthetase family. EpmA subfamily. Homodimer.

The enzyme catalyses D-beta-lysine + L-lysyl-[protein] + ATP = N(6)-((3R)-3,6-diaminohexanoyl)-L-lysyl-[protein] + AMP + diphosphate + H(+). Its function is as follows. With EpmB is involved in the beta-lysylation step of the post-translational modification of translation elongation factor P (EF-P). Catalyzes the ATP-dependent activation of (R)-beta-lysine produced by EpmB, forming a lysyl-adenylate, from which the beta-lysyl moiety is then transferred to the epsilon-amino group of a conserved specific lysine residue in EF-P. This is Elongation factor P--(R)-beta-lysine ligase from Erwinia tasmaniensis (strain DSM 17950 / CFBP 7177 / CIP 109463 / NCPPB 4357 / Et1/99).